A 287-amino-acid polypeptide reads, in one-letter code: ATP synthase gamma chain (287 aa).

This sequence belongs to the ATPase gamma chain family. F-type ATPases have 2 components, CF(1) - the catalytic core - and CF(0) - the membrane proton channel. CF(1) has five subunits: alpha(3), beta(3), gamma(1), delta(1), epsilon(1). CF(0) has three main subunits: a, b and c.

It is found in the cell inner membrane. In terms of biological role, produces ATP from ADP in the presence of a proton gradient across the membrane. The gamma chain is believed to be important in regulating ATPase activity and the flow of protons through the CF(0) complex. This Geobacter metallireducens (strain ATCC 53774 / DSM 7210 / GS-15) protein is ATP synthase gamma chain.